Reading from the N-terminus, the 243-residue chain is Sarcospan (243 aa).

A disordered region spans residues Met-1–Glu-43. At Met-1–Pro-53 the chain is on the cytoplasmic side. Positions Pro-7–Pro-24 are enriched in low complexity. Residues Leu-54–Met-74 form a helical membrane-spanning segment. Residues Ala-75 to Thr-86 are Extracellular-facing. A helical transmembrane segment spans residues Pro-87–Val-107. Residues Ser-108–Lys-122 lie on the Cytoplasmic side of the membrane. A helical membrane pass occupies residues Leu-123–Ala-143. Residues Ala-144–Leu-193 lie on the Extracellular side of the membrane. Residues Phe-194 to Phe-214 form a helical membrane-spanning segment. Residues Val-215 to Ile-243 are Cytoplasmic-facing.

In terms of tissue distribution, isoform 1 is expressed exclusively in heart and skeletal muscle. Isoform 2 is expressed in heart, skeletal muscle, thymus, prostate, testis, ovary, small intestine, colon and spleen.

The protein resides in the cell membrane. It is found in the sarcolemma. Its subcellular location is the postsynaptic cell membrane. Component of the dystrophin-glycoprotein complex (DGC), a complex that spans the muscle plasma membrane and forms a link between the F-actin cytoskeleton and the extracellular matrix. Preferentially associates with the sarcoglycan subcomplex of the DGC. In Homo sapiens (Human), this protein is Sarcospan (SSPN).